The primary structure comprises 665 residues: MTDLQSKYSKLAQEYSKLRAQNQVLKKAVVDEQSSCNSLKDELKQKEQSLRRVEQEMDSLSFRNQQLMKRVELLQEELLLSESKSKKSRSKGDSPSQVSLQAQSVFDEDLHKKIQENERLHIQWLEAQEQHQQQEAQLSSRLQQLQEEAQEHQAQLEELSCRHAHTIHTLQEDKATLEVKLQTLEREARDCRVRTEECQQQLRKYQSEVSSQLKHSSSVIQEKVPFNDTQLSDYNSLNVPAHNRRHQLRAREVAAQALVFLQNLVSALLNFHSYSEQRVQIYPRDSSIETISAVNQKFSQYLHENASYLRQLEEDLLQLHQSITEDLPAATQKFCTTNECLLSSLASLTSSSGKMATFFSNSLDFLTSCAGYSPSGALLKPLQADSVMQSKRRAAAYISSVRQARAESVPYGEALANRHILTSSTESREGLMQQVLQSQQKISRLEQEKEHWLLEAQLAQVRLQKESARIAQLEAQVCVSAPQSQLCASAAESPVCVSAAESQVCVSAAETPSEPALADAPEPLQDTSVVGVLSIRSCSESSADQDSREQLIKTHYMSRVSELTTQLQICDSKAVHFHAECRAVAKRLAMAERSRDTLGEELKLANQNITRLQDELSTTKRSYEDQLSMMSDHLCSMNETLSQQRETIDTLKLSAKGNAKKNKSR.

Coiled-coil stretches lie at residues 1–84 (MTDL…SESK), 125–206 (LEAQ…RKYQ), 426–477 (ESRE…EAQV), and 586–627 (KRLA…EDQL).

In terms of assembly, component of the FERRY complex.

It is found in the early endosome. Its function is as follows. Component of the FERRY complex (Five-subunit Endosomal Rab5 and RNA/ribosome intermediary). The FERRY complex directly interacts with mRNAs and RAB5A, and functions as a RAB5A effector involved in the localization and the distribution of specific mRNAs most likely by mediating their endosomal transport. The complex recruits mRNAs and ribosomes to early endosomes through direct mRNA-interaction. Putative regulator of protein phosphatase 1 (PP1) activity. May play a role in the endosomal sorting process or in endosome maturation pathway. This is Protein phosphatase 1 regulatory subunit 21 (ppp1r21) from Danio rerio (Zebrafish).